Consider the following 304-residue polypeptide: MKKKIVPINPLKADEILAVSHLSCVFNSKTNNPIKVIDDFSYTFQKNQIYCIIGDSGSGKSTLVNHFNGLIKPNQGDIWVKDIYIGAKQRKIKNFKKLRKTISIVFQFPEYQLFKDTVEKDIMFGPVALGQSKYDARQKAAYYLEMMGLKYPFLERNPFELSGGQKRRVAIAGILAIEPEILIFDEPTAGLDPEGEREMMQLIKTAKQQQRTVFMITHQMENVLEVADVVLVLAKGKLVKAASPYEVFMDQTFLEKTTIVLPPVIQVIKDLIAINAHFNKLIELQPKNLEQLASAINKTIANHG.

In terms of domain architecture, ABC transporter spans 11-260 (LKADEILAVS…QTFLEKTTIV (250 aa)). 54-61 (GDSGSGKS) lines the ATP pocket.

Belongs to the ABC transporter superfamily. Energy-coupling factor EcfA family. As to quaternary structure, forms a stable energy-coupling factor (ECF) transporter complex composed of 2 membrane-embedded substrate-binding proteins (S component), 2 ATP-binding proteins (A component) and 2 transmembrane proteins (T component).

It is found in the cell membrane. In terms of biological role, ATP-binding (A) component of a common energy-coupling factor (ECF) ABC-transporter complex. Unlike classic ABC transporters this ECF transporter provides the energy necessary to transport a number of different substrates. The chain is Energy-coupling factor transporter ATP-binding protein EcfA2 from Mycoplasma genitalium (strain ATCC 33530 / DSM 19775 / NCTC 10195 / G37) (Mycoplasmoides genitalium).